The following is a 374-amino-acid chain: Peptide chain release factor 2 (374 aa).

Gln-250 bears the N5-methylglutamine mark.

Belongs to the prokaryotic/mitochondrial release factor family. In terms of processing, methylated by PrmC. Methylation increases the termination efficiency of RF2.

The protein resides in the cytoplasm. In terms of biological role, peptide chain release factor 2 directs the termination of translation in response to the peptide chain termination codons UGA and UAA. In Beutenbergia cavernae (strain ATCC BAA-8 / DSM 12333 / CCUG 43141 / JCM 11478 / NBRC 16432 / NCIMB 13614 / HKI 0122), this protein is Peptide chain release factor 2.